Here is a 342-residue protein sequence, read N- to C-terminus: Delta(6)-protoilludene synthase 8 (342 aa).

A Mg(2+)-binding site is contributed by D81. Positions 93-97 (RDMVD) match the DDXXD motif motif. Mg(2+) is bound by residues N217, S221, and E225. Residues 217-225 (NDLVSYNRE) carry the NSE/DTE motif motif. Residues R305 and Y306 each contribute to the (2E,6E)-farnesyl diphosphate site.

This sequence belongs to the terpene synthase family. Requires Mg(2+) as cofactor.

It carries out the reaction (2E,6E)-farnesyl diphosphate = Delta(6)-protoilludene + diphosphate. In terms of biological role, terpene cyclase that catalyzes the cyclization of farnesyl diphosphate (FPP) to delta(6)-protoilludene. The chain is Delta(6)-protoilludene synthase 8 from Postia placenta (strain ATCC 44394 / Madison 698-R) (Brown rot fungus).